Here is a 448-residue protein sequence, read N- to C-terminus: Glutamyl-tRNA(Gln) amidotransferase subunit D (448 aa).

An Asparaginase/glutaminase domain is found at 92-423; that stretch reads SEVKIISTGG…DKIRSLMLTN (332 aa). Residues T102, T178, D179, and K257 contribute to the active site.

This sequence belongs to the asparaginase 1 family. GatD subfamily. Heterodimer of GatD and GatE.

The enzyme catalyses L-glutamyl-tRNA(Gln) + L-glutamine + ATP + H2O = L-glutaminyl-tRNA(Gln) + L-glutamate + ADP + phosphate + H(+). Allows the formation of correctly charged Gln-tRNA(Gln) through the transamidation of misacylated Glu-tRNA(Gln) in organisms which lack glutaminyl-tRNA synthetase. The reaction takes place in the presence of glutamine and ATP through an activated gamma-phospho-Glu-tRNA(Gln). The GatDE system is specific for glutamate and does not act on aspartate. This is Glutamyl-tRNA(Gln) amidotransferase subunit D from Sulfurisphaera tokodaii (strain DSM 16993 / JCM 10545 / NBRC 100140 / 7) (Sulfolobus tokodaii).